The sequence spans 415 residues: Multidrug resistance protein MdtA (415 aa).

An N-terminal signal peptide occupies residues 1 to 21 (MKGSYKSRWVIVIVVVIAAIA). A compositionally biased stretch (polar residues) spans 31–46 (DSQSAAPGATKQAQQS). Disordered stretches follow at residues 31–56 (DSQSAAPGATKQAQQSPAGGRRGMRA) and 391–415 (VEAQSTTTPEEKATSREYAKKGARS). Residues 399-415 (PEEKATSREYAKKGARS) are compositionally biased toward basic and acidic residues.

Belongs to the membrane fusion protein (MFP) (TC 8.A.1) family. In terms of assembly, part of a tripartite efflux system composed of MdtA, MdtB and MdtC.

The protein localises to the cell inner membrane. Functionally, the MdtABC tripartite complex confers resistance against novobiocin and deoxycholate. In Escherichia coli O45:K1 (strain S88 / ExPEC), this protein is Multidrug resistance protein MdtA.